A 209-amino-acid chain; its full sequence is Molybdenum cofactor guanylyltransferase (209 aa).

Residues L16 to G18, K28, N56, D69, and D103 each bind GTP. D103 is a Mg(2+) binding site.

The protein belongs to the MobA family. Monomer. Mg(2+) serves as cofactor.

Its subcellular location is the cytoplasm. It catalyses the reaction Mo-molybdopterin + GTP + H(+) = Mo-molybdopterin guanine dinucleotide + diphosphate. Transfers a GMP moiety from GTP to Mo-molybdopterin (Mo-MPT) cofactor (Moco or molybdenum cofactor) to form Mo-molybdopterin guanine dinucleotide (Mo-MGD) cofactor. The protein is Molybdenum cofactor guanylyltransferase of Rhizobium leguminosarum bv. trifolii (strain WSM2304).